The chain runs to 359 residues: Peptide chain release factor 1 (359 aa).

Position 233 is an N5-methylglutamine (glutamine 233).

This sequence belongs to the prokaryotic/mitochondrial release factor family. Methylated by PrmC. Methylation increases the termination efficiency of RF1.

The protein resides in the cytoplasm. In terms of biological role, peptide chain release factor 1 directs the termination of translation in response to the peptide chain termination codons UAG and UAA. In Orientia tsutsugamushi (strain Ikeda) (Rickettsia tsutsugamushi), this protein is Peptide chain release factor 1.